A 390-amino-acid chain; its full sequence is 3-ketosteroid-9-alpha-monooxygenase, oxygenase component (390 aa).

The Rieske domain occupies 32–134; that stretch reads WHCLGLLRDF…TLERNGQLYV (103 aa). Positions 73, 75, 92, and 95 each coordinate [2Fe-2S] cluster. Fe cation is bound by residues Asn181, His187, His192, and Asp311.

As to quaternary structure, homotrimer. The two-component system 3-ketosteroid-9-alpha-monooxygenase is composed of an oxygenase component KshA and a reductase component KshB. The cofactor is [2Fe-2S] cluster. Fe cation is required as a cofactor.

The enzyme catalyses androsta-1,4-diene-3,17-dione + 2 reduced [2Fe-2S]-[ferredoxin] + O2 + 2 H(+) = 9alpha-hydroxyandrosta-1,4-diene-3,17-dione + 2 oxidized [2Fe-2S]-[ferredoxin] + H2O. The protein operates within steroid metabolism; cholesterol degradation. In terms of biological role, probably involved in the degradation of cholesterol. In vitro, catalyzes the introduction of a 9alpha-hydroxyl moiety into the ring B of 3-ketosteroid substrates such as 1,4-androstadiene-3,17-dione (ADD), 4-androstene-3,17-dione (AD), 4-androstene-17beta-ol-3-one (testosterone), 4-pregnene-3,20-dione (progesterone), 19-nor-4-androstene-3,17-dione, 1-(5alpha)-androstene-3,17-dione, 5alpha-androstane-3,17-dione, 5beta-androstane-3,17-dione, 5alpha-androstane-17beta-ol-3-one (stanolon), 11beta-hydrocortisone, 3-oxo-23,24-bisnorcholesta-4-en-22-oate (4-BNC), 23,24-bisnorcholesta-4-ene-22-oate, 3-oxo-23,24-bisnorcholesta-1,4-dien-22-oate (1,4-BNC) and 3-oxo-23,24-bisnorcholesta-1,4-dien-22-oyl-coenzyme A thioester (1,4-BNC-CoA). KshA5 has the broadest substrate range without a clear substrate preference and is active with Delta-4, Delta-1,4, 5alpha-H and 5beta-H steroids, as well as with steroids having bulky aliphatic side chains and an isopropionyl side chain at C17. This chain is 3-ketosteroid-9-alpha-monooxygenase, oxygenase component, found in Rhodococcus rhodochrous.